A 156-amino-acid polypeptide reads, in one-letter code: uncharacterized protein (156 aa).

This is an uncharacterized protein from Escherichia coli (strain K12).